A 61-amino-acid polypeptide reads, in one-letter code: Sec-independent protein translocase protein TatA (61 aa).

The helical transmembrane segment at 2 to 22 (GLSGISPLSLLLILAIIVALF) threads the bilayer.

Belongs to the TatA/E family. In terms of assembly, the Tat system comprises two distinct complexes: a TatABC complex, containing multiple copies of TatA, TatB and TatC subunits, and a separate TatA complex, containing only TatA subunits. Substrates initially bind to the TatABC complex, which probably triggers association of the separate TatA complex to form the active translocon.

The protein resides in the cell inner membrane. In terms of biological role, part of the twin-arginine translocation (Tat) system that transports large folded proteins containing a characteristic twin-arginine motif in their signal peptide across membranes. TatA could form the protein-conducting channel of the Tat system. This is Sec-independent protein translocase protein TatA from Legionella pneumophila (strain Paris).